An 81-amino-acid chain; its full sequence is MQPIQIAIVALVVAIIIAIVVWSIVIIEYRKILRQRKIDRLIDRLIERAEDSGNESEGEISALAEMGVEMGHHAPWDVDDL.

Topologically, residues 1–6 are extracellular; it reads MQPIQI. A helical transmembrane segment spans residues 7 to 27; that stretch reads AIVALVVAIIIAIVVWSIVII. At 28-81 the chain is on the cytoplasmic side; the sequence is EYRKILRQRKIDRLIDRLIERAEDSGNESEGEISALAEMGVEMGHHAPWDVDDL. Residues S52 and S56 each carry the phosphoserine; by host CK2 modification.

Belongs to the HIV-1 VPU protein family. Homopentamer. Interacts with host CD4 and BRTC; these interactions induce proteasomal degradation of CD4. Interacts with host BST2; this interaction leads to the degradation of host BST2. Interacts with host FBXW11. Interacts with host AP1M1; this interaction plays a role in the mistrafficking and subsequent degradation of host BST2. Interacts with host RANBP2; this interaction allows Vpu to down-regulate host BLM sumoylation. Phosphorylated by host CK2. This phosphorylation is necessary for interaction with human BTRC and degradation of CD4.

It localises to the host membrane. Ion channel activity is inhibited by hexamethylene amiloride in vitro. Functionally, enhances virion budding by targeting host CD4 and Tetherin/BST2 to proteasome degradation. Degradation of CD4 prevents any unwanted premature interactions between viral Env and its host receptor CD4 in the endoplasmic reticulum. Degradation of antiretroviral protein Tetherin/BST2 is important for virion budding, as BST2 tethers new viral particles to the host cell membrane. Mechanistically, Vpu bridges either CD4 or BST2 to BTRC, a substrate recognition subunit of the Skp1/Cullin/F-box protein E3 ubiquitin ligase, induces their ubiquitination and subsequent proteasomal degradation. The alteration of the E3 ligase specificity by Vpu seems to promote the degradation of host IKBKB, leading to NF-kappa-B down-regulation and subsequent apoptosis. Acts as a viroporin that forms an oligomeric ion channel in membranes. Modulates the host DNA repair mechanisms to promote degradation of nuclear viral cDNA in cells that are already productively infected in order to suppress immune sensing and proviral hyper-integration (superinfection). Manipulates PML-NBs and modulates SUMOylation of host BLM protein thereby enhancing its DNA-end processing activity toward viral unintegrated linear DNA. Also inhibits RAD52-mediated homologous repair of viral cDNA, preventing the generation of dead-end circular forms of single copies of the long terminal repeat and permitting sustained nucleolytic attack. This Homo sapiens (Human) protein is Protein Vpu.